The chain runs to 403 residues: Phosphoglycerate kinase (403 aa).

Substrate-binding positions include 24–26, Arg-39, 62–65, Arg-121, and Arg-161; these read DLN and HLGR. ATP contacts are provided by residues Lys-211, Gly-299, Glu-330, and 359–362; that span reads GGDS.

Belongs to the phosphoglycerate kinase family. As to quaternary structure, monomer.

It is found in the cytoplasm. The catalysed reaction is (2R)-3-phosphoglycerate + ATP = (2R)-3-phospho-glyceroyl phosphate + ADP. It functions in the pathway carbohydrate degradation; glycolysis; pyruvate from D-glyceraldehyde 3-phosphate: step 2/5. The sequence is that of Phosphoglycerate kinase from Rhodococcus jostii (strain RHA1).